Reading from the N-terminus, the 162-residue chain is NADH-quinone oxidoreductase subunit I (162 aa).

2 4Fe-4S ferredoxin-type domains span residues 53–83 and 93–122; these read LRRYPNGEERCIACKLCEAICPAQAITIEPE and RRYDLDMTKCIYCGLCQEACPVDAIVEGPN. [4Fe-4S] cluster is bound by residues C63, C66, C69, C73, C102, C105, C108, and C112.

The protein belongs to the complex I 23 kDa subunit family. In terms of assembly, NDH-1 is composed of 14 different subunits. Subunits NuoA, H, J, K, L, M, N constitute the membrane sector of the complex. It depends on [4Fe-4S] cluster as a cofactor.

The protein localises to the cell inner membrane. The catalysed reaction is a quinone + NADH + 5 H(+)(in) = a quinol + NAD(+) + 4 H(+)(out). Functionally, NDH-1 shuttles electrons from NADH, via FMN and iron-sulfur (Fe-S) centers, to quinones in the respiratory chain. The immediate electron acceptor for the enzyme in this species is believed to be ubiquinone. Couples the redox reaction to proton translocation (for every two electrons transferred, four hydrogen ions are translocated across the cytoplasmic membrane), and thus conserves the redox energy in a proton gradient. The polypeptide is NADH-quinone oxidoreductase subunit I (Paramagnetospirillum magneticum (strain ATCC 700264 / AMB-1) (Magnetospirillum magneticum)).